The following is an 88-amino-acid chain: Putative septation protein SpoVG (88 aa).

Belongs to the SpoVG family.

In terms of biological role, could be involved in septation. The protein is Putative septation protein SpoVG of Lachnospira eligens (strain ATCC 27750 / DSM 3376 / VPI C15-48 / C15-B4) (Eubacterium eligens).